The primary structure comprises 298 residues: GTP-binding protein REM 1 (298 aa).

Residues M1 to S73 form a disordered region. The span at T35–P55 shows a compositional bias: polar residues. Phosphoserine is present on S51. Low complexity predominate over residues P63–S73. GTP contacts are provided by residues G87–T94 and N195–D198. A calmodulin-binding region spans residues A268–A287.

It belongs to the small GTPase superfamily. RGK family. In terms of assembly, in vitro, interacts with calmodulin in a calcium-dependent manner. Most highly expressed in the endothelial lining of the blood vessels in uterus and heart. Lower levels found in spleen, lymph node, kidney and testis. Also found in cells with secretory function such as the islets of Langerhans, lobule/duct epithelium in the breast, bile duct epithelium in the liver, surface epithelium in the endometrial glands of the uterus, colon mucosa and acinar cells in the pancreas and the prostate.

Promotes endothelial cell sprouting and actin cytoskeletal reorganization. May be involved in angiogenesis. May function in Ca(2+) signaling. The chain is GTP-binding protein REM 1 (REM1) from Homo sapiens (Human).